We begin with the raw amino-acid sequence, 354 residues long: Selection and upkeep of intraepithelial T-cells protein 10 (354 aa).

The N-terminal stretch at 1–52 (MFLRTQMEQSQADIFALIKPHFGVMESSASYLPGFFMTFLLLQTTVLTQAMS) is a signal peptide. In terms of domain architecture, Ig-like V-type spans 53-141 (LDIQINIQVP…TNREKKRSVV (89 aa)). Topologically, residues 53 to 158 (LDIQINIQVP…SEYMSLMSNK (106 aa)) are extracellular. C71 and C125 are joined by a disulfide. N-linked (GlcNAc...) asparagine glycosylation is present at N129. Residues 159–179 (FSCPLTYLFIIIFLNCLKGML) traverse the membrane as a helical segment. Over 180–209 (DFCCLKGKPVYFRELINKIKEVLNIKMRAC) the chain is Cytoplasmic. Residues 210–230 (CTLIWEFLLIVLYIAFLPFYL) traverse the membrane as a helical segment. The Extracellular segment spans residues 231-252 (KFRSRASILDDAYPLHSNWLWD). The chain crosses the membrane as a helical span at residues 253 to 273 (ICIVLSVLMIFFTGLSLFLLW). Topologically, residues 274 to 354 (TLNCYGQMSY…RLDCSLNWKT (81 aa)) are cytoplasmic.

Belongs to the SKINT family. As to expression, expressed in skin and thymus.

It localises to the membrane. May act by engaging a cell surface molecule on immature T-cells in the embryonic thymus. The polypeptide is Selection and upkeep of intraepithelial T-cells protein 10 (Skint10) (Mus musculus (Mouse)).